A 412-amino-acid polypeptide reads, in one-letter code: Tyrosine--tRNA ligase (412 aa).

Tyr-41 is a binding site for L-tyrosine. Positions 46 to 55 (ATADSLHVGH) match the 'HIGH' region motif. Tyr-174 and Gln-178 together coordinate L-tyrosine. Residues 234–238 (KMGKS) carry the 'KMSKS' region motif. An ATP-binding site is contributed by Lys-237. The region spanning 348-411 (LSLTDLLLEH…KKQHLHLRLE (64 aa)) is the S4 RNA-binding domain.

This sequence belongs to the class-I aminoacyl-tRNA synthetase family. TyrS type 1 subfamily. In terms of assembly, homodimer.

It localises to the cytoplasm. The enzyme catalyses tRNA(Tyr) + L-tyrosine + ATP = L-tyrosyl-tRNA(Tyr) + AMP + diphosphate + H(+). Functionally, catalyzes the attachment of tyrosine to tRNA(Tyr) in a two-step reaction: tyrosine is first activated by ATP to form Tyr-AMP and then transferred to the acceptor end of tRNA(Tyr). The polypeptide is Tyrosine--tRNA ligase (Pseudomonas aeruginosa (strain LESB58)).